We begin with the raw amino-acid sequence, 563 residues long: Testis-expressed basic protein 1 (563 aa).

The chain crosses the membrane as a helical span at residues 3 to 23; sequence VLEITLAVILTLLGLAILAIL. Residues 56–81 are disordered; sequence GSRHAYSTQSDTSYDNRERSKRDYTP. The span at 69-79 shows a compositional bias: basic and acidic residues; it reads YDNRERSKRDY. A helical membrane pass occupies residues 99 to 119; it reads ELILLLMCFILALSRSSIGSI. The tract at residues 311-563 is disordered; it reads SEMSIPQGQG…GRKYNKKVEE (253 aa). Residues 367 to 383 are compositionally biased toward basic and acidic residues; sequence QVEKSEMGVPRRQESQV. Over residues 384–395 the composition is skewed to low complexity; the sequence is KKSQSGVSKGQE. 2 stretches are compositionally biased toward basic and acidic residues: residues 412–447 and 485–544; these read QVEKSELKVPKGQEGQVEKTEADVPKEQEVQEKKSE and EAQE…EKSK.

The protein resides in the membrane. The chain is Testis-expressed basic protein 1 from Homo sapiens (Human).